The chain runs to 417 residues: Glucose-1-phosphate adenylyltransferase (417 aa).

Residues tyrosine 98, glycine 163, glutamate 178 to lysine 179, and serine 197 contribute to the alpha-D-glucose 1-phosphate site.

It belongs to the bacterial/plant glucose-1-phosphate adenylyltransferase family. In terms of assembly, homotetramer.

The enzyme catalyses alpha-D-glucose 1-phosphate + ATP + H(+) = ADP-alpha-D-glucose + diphosphate. It participates in glycan biosynthesis; glycogen biosynthesis. Involved in the biosynthesis of ADP-glucose, a building block required for the elongation reactions to produce glycogen. Catalyzes the reaction between ATP and alpha-D-glucose 1-phosphate (G1P) to produce pyrophosphate and ADP-Glc. In Koribacter versatilis (strain Ellin345), this protein is Glucose-1-phosphate adenylyltransferase.